A 356-amino-acid chain; its full sequence is MASKKQRIGVLTSGGDAPGLNAVIRAVVKSASGLGWEVIGIHDGFEGLLGTKSYRVLTNADVQGLLPRGGTILRTTNKGHFGPRRSDELSEADPYVRAVKAIEEMGLRALITIGGEGTQRIALELHKLGAPVIGVPKTIDNDLAGTDRTFGFDTALQVATDAIDRLHTTAASHNRVMVLEVMGRHTGWIALHAGLAGGADVILIPEIPFSIERVAEKVMARDQQGSSFSIIVVAEGARPRGGSEMYIAEGRLGGIGHWVGEQLEKLTAKEVRVVVLGHLQRGGSPSPYDRLLSTRYGAAAVQAAARGIYGEMVALRGQDIVTVPLAEACGHLNRVRPHSDLVLCARSLGIAFGDEL.

ATP-binding positions include Gly-15, 78–79 (KG), and 115–118 (GEGT). Residue Glu-116 coordinates Mg(2+). Residues 138-140 (TID), Arg-175, 182-184 (MGR), Glu-235, Arg-272, and 278-281 (HLQR) contribute to the substrate site. Asp-140 functions as the Proton acceptor in the catalytic mechanism.

This sequence belongs to the phosphofructokinase type A (PFKA) family. Mixed-substrate PFK group III subfamily. As to quaternary structure, homodimer or homotetramer. Mg(2+) is required as a cofactor.

The protein resides in the cytoplasm. It carries out the reaction beta-D-fructose 6-phosphate + ATP = beta-D-fructose 1,6-bisphosphate + ADP + H(+). It functions in the pathway carbohydrate degradation; glycolysis; D-glyceraldehyde 3-phosphate and glycerone phosphate from D-glucose: step 3/4. Functionally, catalyzes the phosphorylation of D-fructose 6-phosphate to fructose 1,6-bisphosphate by ATP, the first committing step of glycolysis. The sequence is that of ATP-dependent 6-phosphofructokinase from Chloroflexus aurantiacus (strain ATCC 29366 / DSM 635 / J-10-fl).